Reading from the N-terminus, the 139-residue chain is D-ribose pyranase (139 aa).

The active-site Proton donor is His20. Residues Asp28, His106, and 128-130 contribute to the substrate site; that span reads YAN.

This sequence belongs to the RbsD / FucU family. RbsD subfamily. Homodecamer.

Its subcellular location is the cytoplasm. It catalyses the reaction beta-D-ribopyranose = beta-D-ribofuranose. It participates in carbohydrate metabolism; D-ribose degradation; D-ribose 5-phosphate from beta-D-ribopyranose: step 1/2. Its function is as follows. Catalyzes the interconversion of beta-pyran and beta-furan forms of D-ribose. The protein is D-ribose pyranase of Aliivibrio fischeri (strain ATCC 700601 / ES114) (Vibrio fischeri).